A 401-amino-acid chain; its full sequence is 4-hydroxy-3-methylbut-2-enyl diphosphate reductase (401 aa).

Cys-66 serves as a coordination point for [4Fe-4S] cluster. Position 96 (His-96) interacts with (2E)-4-hydroxy-3-methylbut-2-enyl diphosphate. Residue His-96 coordinates dimethylallyl diphosphate. Residue His-96 coordinates isopentenyl diphosphate. Position 157 (Cys-157) interacts with [4Fe-4S] cluster. Residue His-185 participates in (2E)-4-hydroxy-3-methylbut-2-enyl diphosphate binding. His-185 provides a ligand contact to dimethylallyl diphosphate. An isopentenyl diphosphate-binding site is contributed by His-185. The Proton donor role is filled by Glu-187. Residue Thr-250 coordinates (2E)-4-hydroxy-3-methylbut-2-enyl diphosphate. Cys-288 contributes to the [4Fe-4S] cluster binding site. (2E)-4-hydroxy-3-methylbut-2-enyl diphosphate is bound by residues Ser-317, Ser-318, Asn-319, and Ser-381. Ser-317, Ser-318, Asn-319, and Ser-381 together coordinate dimethylallyl diphosphate. Positions 317, 318, 319, and 381 each coordinate isopentenyl diphosphate.

This sequence belongs to the IspH family. [4Fe-4S] cluster is required as a cofactor.

It carries out the reaction isopentenyl diphosphate + 2 oxidized [2Fe-2S]-[ferredoxin] + H2O = (2E)-4-hydroxy-3-methylbut-2-enyl diphosphate + 2 reduced [2Fe-2S]-[ferredoxin] + 2 H(+). It catalyses the reaction dimethylallyl diphosphate + 2 oxidized [2Fe-2S]-[ferredoxin] + H2O = (2E)-4-hydroxy-3-methylbut-2-enyl diphosphate + 2 reduced [2Fe-2S]-[ferredoxin] + 2 H(+). It participates in isoprenoid biosynthesis; dimethylallyl diphosphate biosynthesis; dimethylallyl diphosphate from (2E)-4-hydroxy-3-methylbutenyl diphosphate: step 1/1. It functions in the pathway isoprenoid biosynthesis; isopentenyl diphosphate biosynthesis via DXP pathway; isopentenyl diphosphate from 1-deoxy-D-xylulose 5-phosphate: step 6/6. Functionally, catalyzes the conversion of 1-hydroxy-2-methyl-2-(E)-butenyl 4-diphosphate (HMBPP) into a mixture of isopentenyl diphosphate (IPP) and dimethylallyl diphosphate (DMAPP). Acts in the terminal step of the DOXP/MEP pathway for isoprenoid precursor biosynthesis. The protein is 4-hydroxy-3-methylbut-2-enyl diphosphate reductase of Prochlorococcus marinus (strain NATL1A).